A 292-amino-acid polypeptide reads, in one-letter code: Ribonuclease T2-like (292 aa).

Residues 1 to 23 (MAKTASAMLFLYLLLSRCLLSHA) form the signal peptide. Disulfide bonds link C42/C61, C50/C103, C60/C177, C111/C169, and C246/C280. A glycan (N-linked (GlcNAc...) asparagine) is linked at N52. Residues H96, E162, and H166 contribute to the active site.

Belongs to the RNase T2 family.

It localises to the vacuole lumen. The protein resides in the cytoplasm. The catalysed reaction is a ribonucleotidyl-ribonucleotide-RNA + H2O = a 3'-end 3'-phospho-ribonucleotide-RNA + a 5'-end dephospho-ribonucleoside-RNA + H(+). Its function is as follows. Rnase which modulates cell survival under stress conditions. Released from the vacuole to the cytoplasm during stress to promote tRNA and rRNA cleavage and to activate separately a downstream pathway that promotes cell death. Involved in cell size, vacuolar morphology and growth at high temperatures and high salt concentration. This Eremothecium gossypii (strain ATCC 10895 / CBS 109.51 / FGSC 9923 / NRRL Y-1056) (Yeast) protein is Ribonuclease T2-like (RNY1).